We begin with the raw amino-acid sequence, 582 residues long: ATP-dependent lipid A-core flippase (582 aa).

5 helical membrane passes run 26-46 (LIAASVALILNALVDSSLIYL), 68-88 (ILVMLFILLRGVSNYIASYCL), 140-160 (YVLVTIVREGAYLISLFAVMV), 164-184 (WQLSIVLFLLAPIIAFLISIV), and 252-272 (GLVQLIASLALSAVLYVATFP). The 284-residue stretch at 27–310 (IAASVALILN…LTSVNSQFQR (284 aa)) folds into the ABC transmembrane type-1 domain. Positions 342–578 (ITFDNVIFSY…GGAYKQLYSM (237 aa)) constitute an ABC transporter domain. 376–383 (GRSGSGKS) provides a ligand contact to ATP.

Belongs to the ABC transporter superfamily. Lipid exporter (TC 3.A.1.106) family. In terms of assembly, homodimer.

Its subcellular location is the cell inner membrane. It catalyses the reaction ATP + H2O + lipid A-core oligosaccharideSide 1 = ADP + phosphate + lipid A-core oligosaccharideSide 2.. In terms of biological role, involved in lipopolysaccharide (LPS) biosynthesis. Translocates lipid A-core from the inner to the outer leaflet of the inner membrane. Transmembrane domains (TMD) form a pore in the inner membrane and the ATP-binding domain (NBD) is responsible for energy generation. The chain is ATP-dependent lipid A-core flippase from Haemophilus ducreyi (strain 35000HP / ATCC 700724).